Consider the following 218-residue polypeptide: Ribose-5-phosphate isomerase A (218 aa).

Substrate-binding positions include 28–31 (TGST), 81–84 (DSAD), and 94–97 (KGGG). The Proton acceptor role is filled by Glu103. Lys121 is a substrate binding site.

This sequence belongs to the ribose 5-phosphate isomerase family. Homodimer.

It catalyses the reaction aldehydo-D-ribose 5-phosphate = D-ribulose 5-phosphate. The protein operates within carbohydrate degradation; pentose phosphate pathway; D-ribose 5-phosphate from D-ribulose 5-phosphate (non-oxidative stage): step 1/1. Catalyzes the reversible conversion of ribose-5-phosphate to ribulose 5-phosphate. The sequence is that of Ribose-5-phosphate isomerase A from Buchnera aphidicola subsp. Baizongia pistaciae (strain Bp).